The sequence spans 224 residues: Ribonuclease T (224 aa).

Positions 1-11 (MSEDLYEDDLD) are enriched in acidic residues. A disordered region spans residues 1 to 22 (MSEDLYEDDLDTQGSSGPRHPM). The Exonuclease domain occupies 32 to 206 (VVVDVETGGF…YDTEKTAELF (175 aa)). The Mg(2+) site is built by aspartate 35, glutamate 37, histidine 193, and aspartate 198. The active-site Proton donor/acceptor is histidine 193.

Belongs to the RNase T family. In terms of assembly, homodimer. Mg(2+) serves as cofactor.

Its function is as follows. Trims short 3' overhangs of a variety of RNA species, leaving a one or two nucleotide 3' overhang. Responsible for the end-turnover of tRNA: specifically removes the terminal AMP residue from uncharged tRNA (tRNA-C-C-A). Also appears to be involved in tRNA biosynthesis. This is Ribonuclease T from Pseudomonas putida (strain ATCC 700007 / DSM 6899 / JCM 31910 / BCRC 17059 / LMG 24140 / F1).